Consider the following 396-residue polypeptide: Cytochrome c biogenesis protein Ccs1 (396 aa).

Transmembrane regions (helical) follow at residues L22 to I42, S79 to K99, and A162 to A182.

It belongs to the Ccs1/CcsB family. May interact with CcsA.

The protein resides in the plastid. The protein localises to the chloroplast thylakoid membrane. In terms of biological role, required during biogenesis of c-type cytochromes (cytochrome c6 and cytochrome f) at the step of heme attachment. This is Cytochrome c biogenesis protein Ccs1 from Cyanidium caldarium (Red alga).